A 71-amino-acid polypeptide reads, in one-letter code: MMNRLLVFLMLGAFMLVVSANDAYGDEPAFKDLNQGDESLGKRKSCCPCWLRGNCFWGQNCYPEGCSGPKV.

An N-terminal signal peptide occupies residues 1–20; sequence MMNRLLVFLMLGAFMLVVSA. Residues 21-41 constitute a propeptide that is removed on maturation; sequence NDAYGDEPAFKDLNQGDESLG. 3 disulfides stabilise this stretch: cysteine 46–cysteine 61, cysteine 47–cysteine 55, and cysteine 49–cysteine 66.

Belongs to the sea anemone short toxin (type III) family.

It is found in the secreted. Its subcellular location is the nematocyst. Its function is as follows. Voltage-gated sodium channel (Nav) inhibitor. 1 uM completely inhibits insect voltage-gated sodium channel inactivation (DmNav1 from D.melanogaster). This Anemonia viridis (Snakelocks anemone) protein is Delta-actitoxin-Avd2b 4.